The following is a 480-amino-acid chain: Glutamyl-tRNA(Gln) amidotransferase subunit A (480 aa).

Catalysis depends on charge relay system residues Lys-70 and Ser-145. Ser-169 acts as the Acyl-ester intermediate in catalysis.

It belongs to the amidase family. GatA subfamily. Heterotrimer of A, B and C subunits.

It carries out the reaction L-glutamyl-tRNA(Gln) + L-glutamine + ATP + H2O = L-glutaminyl-tRNA(Gln) + L-glutamate + ADP + phosphate + H(+). Functionally, allows the formation of correctly charged Gln-tRNA(Gln) through the transamidation of misacylated Glu-tRNA(Gln) in organisms which lack glutaminyl-tRNA synthetase. The reaction takes place in the presence of glutamine and ATP through an activated gamma-phospho-Glu-tRNA(Gln). The polypeptide is Glutamyl-tRNA(Gln) amidotransferase subunit A (Lactobacillus delbrueckii subsp. bulgaricus (strain ATCC 11842 / DSM 20081 / BCRC 10696 / JCM 1002 / NBRC 13953 / NCIMB 11778 / NCTC 12712 / WDCM 00102 / Lb 14)).